Reading from the N-terminus, the 158-residue chain is Putative pre-16S rRNA nuclease (158 aa).

Belongs to the YqgF nuclease family.

The protein localises to the cytoplasm. Its function is as follows. Could be a nuclease involved in processing of the 5'-end of pre-16S rRNA. The protein is Putative pre-16S rRNA nuclease of Hahella chejuensis (strain KCTC 2396).